A 360-amino-acid chain; its full sequence is DNA replication and repair protein RecF (360 aa).

Residue 30–37 participates in ATP binding; sequence GVNGAGKT.

This sequence belongs to the RecF family.

It localises to the cytoplasm. Functionally, the RecF protein is involved in DNA metabolism; it is required for DNA replication and normal SOS inducibility. RecF binds preferentially to single-stranded, linear DNA. It also seems to bind ATP. The protein is DNA replication and repair protein RecF of Thioalkalivibrio sulfidiphilus (strain HL-EbGR7).